Reading from the N-terminus, the 122-residue chain is Small ribosomal subunit protein uS13 (122 aa).

The interval 97–122 (PVRGQRTHTNAKTRKGRSKLPIAGKK) is disordered.

It belongs to the universal ribosomal protein uS13 family. As to quaternary structure, part of the 30S ribosomal subunit. Forms a loose heterodimer with protein S19. Forms two bridges to the 50S subunit in the 70S ribosome.

Its function is as follows. Located at the top of the head of the 30S subunit, it contacts several helices of the 16S rRNA. In the 70S ribosome it contacts the 23S rRNA (bridge B1a) and protein L5 of the 50S subunit (bridge B1b), connecting the 2 subunits; these bridges are implicated in subunit movement. Contacts the tRNAs in the A and P-sites. The sequence is that of Small ribosomal subunit protein uS13 from Wolbachia pipientis subsp. Culex pipiens (strain wPip).